The primary structure comprises 182 residues: NADH-quinone oxidoreductase subunit 9 (182 aa).

2 4Fe-4S ferredoxin-type domains span residues 43 to 73 (LTRH…VEPA) and 89 to 118 (KVYE…LGYD). 10 residues coordinate [4Fe-4S] cluster: Cys-53, Cys-56, Ser-57, Cys-59, Cys-63, Cys-98, Ile-99, Cys-101, Cys-104, and Cys-108.

Belongs to the complex I 23 kDa subunit family. As to quaternary structure, NDH-1 is composed of 15 different subunits, Nqo1 to Nqo15. The complex has a L-shaped structure, with the hydrophobic arm (subunits Nqo7, Nqo8 and Nqo10 to Nqo14) embedded in the membrane and the hydrophilic peripheral arm (subunits Nqo1 to Nqo6, Nqo9 and Nqo15) protruding into the bacterial cytoplasm. The hydrophilic domain contains all the redox centers. The cofactor is [4Fe-4S] cluster.

The protein resides in the cell membrane. The enzyme catalyses a quinone + NADH + 5 H(+)(in) = a quinol + NAD(+) + 4 H(+)(out). NDH-1 shuttles electrons from NADH, via FMN and iron-sulfur (Fe-S) centers, to quinones in the respiratory chain. The immediate electron acceptor for the enzyme in this species is menaquinone. Couples the redox reaction to proton translocation (for every two electrons transferred, four hydrogen ions are translocated across the cytoplasmic membrane), and thus conserves the redox energy in a proton gradient required for the synthesis of ATP. The role of the Nqo9 subunit appears to provide a 'connecting chain' of two clusters between cluster N5 and the terminal cluster N2, and to stabilize the structure of the complex by interacting with other subunits. The protein is NADH-quinone oxidoreductase subunit 9 (nqo9) of Thermus thermophilus (strain ATCC 27634 / DSM 579 / HB8).